The chain runs to 316 residues: Olfactory receptor 1165 (316 aa).

Topologically, residues M1–P28 are extracellular. The N-linked (GlcNAc...) asparagine glycan is linked to N7. Residues L29–V50 form a helical membrane-spanning segment. Over R51–M61 the chain is Cytoplasmic. A helical transmembrane segment spans residues Y62 to T80. At P81–C99 the chain is on the extracellular side. A disulfide bridge connects residues C99 and C181. Residues M100–Y122 form a helical membrane-spanning segment. At D123 to K141 the chain is on the cytoplasmic side. Residues L142–L166 form a helical membrane-spanning segment. Residues Q167–S205 lie on the Extracellular side of the membrane. A helical transmembrane segment spans residues I206–I228. Residues K229–A239 are Cytoplasmic-facing. Residues F240–V263 traverse the membrane as a helical segment. Residues P264–N268 lie on the Extracellular side of the membrane. Residues S269 to I291 traverse the membrane as a helical segment. Residues Y292–T316 lie on the Cytoplasmic side of the membrane.

This sequence belongs to the G-protein coupled receptor 1 family.

It is found in the cell membrane. Its function is as follows. Olfactory receptor. This is Olfactory receptor 1165 from Mus musculus (Mouse).